Here is a 265-residue protein sequence, read N- to C-terminus: Undecaprenyl-diphosphatase (265 aa).

7 consecutive transmembrane segments (helical) span residues S38 to W58, L80 to E100, P107 to A127, I135 to G155, A175 to Y195, A213 to L233, and F244 to I264.

This sequence belongs to the UppP family.

The protein localises to the cell inner membrane. It catalyses the reaction di-trans,octa-cis-undecaprenyl diphosphate + H2O = di-trans,octa-cis-undecaprenyl phosphate + phosphate + H(+). Its function is as follows. Catalyzes the dephosphorylation of undecaprenyl diphosphate (UPP). Confers resistance to bacitracin. The chain is Undecaprenyl-diphosphatase from Rhizobium etli (strain CIAT 652).